Consider the following 105-residue polypeptide: Large ribosomal subunit protein bL21 (105 aa).

This sequence belongs to the bacterial ribosomal protein bL21 family. As to quaternary structure, part of the 50S ribosomal subunit. Contacts protein L20.

Functionally, this protein binds to 23S rRNA in the presence of protein L20. In Aliarcobacter butzleri (strain RM4018) (Arcobacter butzleri), this protein is Large ribosomal subunit protein bL21.